The sequence spans 641 residues: MDQTYLDQQQLDANVNHQQLSQDTNSIPQQQLQQQQQPLQQLQQYQQQPLSNANFSGDNRFQQYQPRVTPSVSSSQQSIHNTTGYVTMHSGNYTPNQQYGVPNQYTVLQQQPPRQQSYEENINPLSYNSNYRTLSAPIPPLHIQHQLASKQNQDQNQSQNRYEQSSMTSIHTNDNSSSVNNSPNTMMIKQEHSTFQPQHSNEGSSAYHPVDQQNHQQQQQPQQQQQPQQQQQPQQQQQPQQPMTRSICTRCKKGFDQPIIYPKSSNSTNGNNSNGQNSSSIPPPEPRTFKLCDHCRKLQRQRSRRWQKKTKDREGVCRRCGSEIPLAERRFVLCPSCRENLRLRKASRAAQGRCVHCSGPLDASILSKENEGNNNGDEQNNKSNEDQNNESRRGSQEKPARGASHKVCQRCRENDKIRRANLEKMGNCNRCAKALDPNEYGRNKVCFNCRTKKKRSPPENVTNTDEVRTSPIQNQYGMNMSHQYIQPPPPPPPPLMTGHHQFQPQPHMMGHEQMNTFTTMSNSGVAGIQQPNNGMVVGDQQQQQQQHNGSMQLQPTYYQSYVQMPPPLQLQQQQQQQQQHYSLDGIPQQPHSAPTSSFPPPPPPPLQLNQHQGLQQYSHAQQQQQQQHQQQQPYHQEYPNN.

Residues 13 to 27 show a composition bias toward polar residues; the sequence is ANVNHQQLSQDTNSI. 3 disordered regions span residues 13–38, 146–245, and 258–287; these read ANVNHQQLSQDTNSIPQQQLQQQQQP, QLAS…PMTR, and PIIYPKSSNSTNGNNSNGQNSSSIPPPEPR. Composition is skewed to low complexity over residues 28–38 and 151–160; these read PQQQLQQQQQP and QNQDQNQSQN. Over residues 161–172 the composition is skewed to polar residues; it reads RYEQSSMTSIHT. Low complexity predominate over residues 173–184; sequence NDNSSSVNNSPN. Polar residues predominate over residues 193–204; the sequence is STFQPQHSNEGS. 2 stretches are compositionally biased toward low complexity: residues 216–242 and 264–280; these read QQQQQPQQQQQPQQQQQPQQQQQPQQP and SSNSTNGNNSNGQNSSS. A dksA C4-type zinc finger spans residues 317–337; the sequence is CRRCGSEIPLAERRFVLCPSC. Disordered stretches follow at residues 366-409, 480-507, 522-550, and 568-641; these read LSKE…KVCQ, MSHQYIQPPPPPPPPLMTGHHQFQPQPH, NSGVAGIQQPNNGMVVGDQQQQQQQHNGS, and LQLQ…YPNN. Residues 379–400 are compositionally biased toward basic and acidic residues; that stretch reads QNNKSNEDQNNESRRGSQEKPA. Positions 486–495 are enriched in pro residues; the sequence is QPPPPPPPPL. Residues 522–533 show a composition bias toward polar residues; the sequence is NSGVAGIQQPNN. A compositionally biased stretch (low complexity) spans 569-579; that stretch reads QLQQQQQQQQQ. The segment covering 597–606 has biased composition (pro residues); the sequence is SFPPPPPPPL. The segment covering 610-641 has biased composition (low complexity); it reads QHQGLQQYSHAQQQQQQQHQQQQPYHQEYPNN.

It is found in the nucleus. Transcription factor that modulates the white-opaque switch. In Candida albicans (strain SC5314 / ATCC MYA-2876) (Yeast), this protein is White-opaque regulator 3 (WOR3).